The primary structure comprises 583 residues: Kelch-like protein 35 (583 aa).

Residues Thr-41–Ala-119 form the BTB domain. One can recognise a BACK domain in the interval Leu-146–Ala-248. Kelch repeat units lie at residues Val-301–Asn-350, Val-352–Gly-394, Gln-395–Gly-441, Leu-443–Asp-489, Thr-490–Gly-531, and Val-533–Gln-579.

This Homo sapiens (Human) protein is Kelch-like protein 35 (KLHL35).